A 772-amino-acid chain; its full sequence is Potassium transporter 24 (772 aa).

The Cytoplasmic portion of the chain corresponds to 1-23; the sequence is MDVEGGGAAARRKGGWWWWREEA. The helical transmembrane segment at 24–44 threads the bilayer; the sequence is VLAYQSLGVVYGEVAAAPLYV. The Extracellular portion of the chain corresponds to 45-66; that stretch reads YRSAFAGGDIEHSAGNEEIYGA. The helical transmembrane segment at 67–87 threads the bilayer; the sequence is LSLVFWTLTLVPLAKYVLLVL. Over 88–150 the chain is Cytoplasmic; the sequence is RADDAGEGGT…ALERHRVLQR (63 aa). A helical membrane pass occupies residues 151–171; the sequence is LLLLLALLGTCMVIGDGVLTP. Topologically, residues 172–192 are extracellular; sequence AVSVFSAVSGLELSMDKDQHK. The chain crosses the membrane as a helical span at residues 193–213; that stretch reads YILLPITCVILVCLFALQHYG. The Cytoplasmic portion of the chain corresponds to 214 to 216; it reads THR. The helical transmembrane segment at 217–237 threads the bilayer; sequence VGFLFAPIVCLWLLCISIIGV. At 238–265 the chain is on the extracellular side; sequence YNIIHWNPHVYQALSPYYMYKFLRKTQT. Residues 266-286 form a helical membrane-spanning segment; it reads GGWMSLGGILLCVTGSEAMYA. Residues 287 to 298 are Cytoplasmic-facing; it reads DLGHFTQNSIKM. Residues 299–319 form a helical membrane-spanning segment; it reads AFTLLVYPALVLAYMGQAAYI. Residues 320–344 lie on the Extracellular side of the membrane; the sequence is SRHHNFEDGSHIGFYVSVPEKIRWP. A helical membrane pass occupies residues 345–365; that stretch reads VLGIAILASVVGSQAIITGTF. Residues 366 to 392 are Cytoplasmic-facing; sequence SIIKQCSSLNCFPRVKIVHTSSTVHGQ. Residues 393–413 traverse the membrane as a helical segment; sequence IYIPEINWILMILCLSVTIGF. Over 414–423 the chain is Extracellular; it reads RDTKHLTNAQ. A helical transmembrane segment spans residues 424-444; it reads GLAVITVMLVTTCLMSLVILL. Residues 445-449 lie on the Cytoplasmic side of the membrane; it reads CWNKS. A helical transmembrane segment spans residues 450 to 470; it reads IVYALSFLLFFGAIEVIYFAA. Topologically, residues 471–477 are extracellular; it reads SLVKFHE. A helical membrane pass occupies residues 478–498; it reads GAWVPVTLSFIFMMVMCVWHY. Topologically, residues 499–772 are cytoplasmic; that stretch reads GTKKKYEFDV…TVEVGMICLV (274 aa). Residues 656–684 are disordered; it reads EEGEFDGSDSTGSSAHKEINPNTTAPKPK.

Belongs to the HAK/KUP transporter (TC 2.A.72.3) family.

It localises to the membrane. High-affinity potassium transporter. This Oryza sativa subsp. japonica (Rice) protein is Potassium transporter 24 (HAK24).